Here is a 253-residue protein sequence, read N- to C-terminus: Triosephosphate isomerase (253 aa).

9–11 contributes to the substrate binding site; the sequence is NWK. Catalysis depends on histidine 94, which acts as the Electrophile. Glutamate 163 functions as the Proton acceptor in the catalytic mechanism. Substrate-binding positions include glycine 169, serine 209, and 230–231; that span reads GG.

This sequence belongs to the triosephosphate isomerase family. Homodimer.

It localises to the cytoplasm. The enzyme catalyses D-glyceraldehyde 3-phosphate = dihydroxyacetone phosphate. It functions in the pathway carbohydrate biosynthesis; gluconeogenesis. Its pathway is carbohydrate degradation; glycolysis; D-glyceraldehyde 3-phosphate from glycerone phosphate: step 1/1. Its function is as follows. Involved in the gluconeogenesis. Catalyzes stereospecifically the conversion of dihydroxyacetone phosphate (DHAP) to D-glyceraldehyde-3-phosphate (G3P). The polypeptide is Triosephosphate isomerase (Dehalococcoides mccartyi (strain CBDB1)).